The sequence spans 122 residues: Large ribosomal subunit protein uL14 (122 aa).

This sequence belongs to the universal ribosomal protein uL14 family. In terms of assembly, part of the 50S ribosomal subunit. Forms a cluster with proteins L3 and L19. In the 70S ribosome, L14 and L19 interact and together make contacts with the 16S rRNA in bridges B5 and B8.

Functionally, binds to 23S rRNA. Forms part of two intersubunit bridges in the 70S ribosome. This chain is Large ribosomal subunit protein uL14, found in Gluconacetobacter diazotrophicus (strain ATCC 49037 / DSM 5601 / CCUG 37298 / CIP 103539 / LMG 7603 / PAl5).